Here is a 345-residue protein sequence, read N- to C-terminus: Dihydroorotase (345 aa).

Zn(2+) contacts are provided by His-13 and His-15. Substrate is bound by residues 15–17 and Asn-41; that span reads HFR. The Zn(2+) site is built by Lys-98, His-135, and His-173. Lys-98 bears the N6-carboxylysine mark. A substrate-binding site is contributed by His-135. Leu-218 provides a ligand contact to substrate. Residue Asp-246 participates in Zn(2+) binding. Residue Asp-246 is part of the active site. Residues His-250 and Ala-262 each contribute to the substrate site.

This sequence belongs to the metallo-dependent hydrolases superfamily. DHOase family. Class II DHOase subfamily. Homodimer. Zn(2+) is required as a cofactor.

The catalysed reaction is (S)-dihydroorotate + H2O = N-carbamoyl-L-aspartate + H(+). The protein operates within pyrimidine metabolism; UMP biosynthesis via de novo pathway; (S)-dihydroorotate from bicarbonate: step 3/3. In terms of biological role, catalyzes the reversible cyclization of carbamoyl aspartate to dihydroorotate. In Shewanella pealeana (strain ATCC 700345 / ANG-SQ1), this protein is Dihydroorotase.